Here is a 369-residue protein sequence, read N- to C-terminus: Peptide chain release factor 2 (369 aa).

The residue at position 251 (Gln-251) is an N5-methylglutamine.

It belongs to the prokaryotic/mitochondrial release factor family. Post-translationally, methylated by PrmC. Methylation increases the termination efficiency of RF2.

It is found in the cytoplasm. Peptide chain release factor 2 directs the termination of translation in response to the peptide chain termination codons UGA and UAA. This Campylobacter fetus subsp. fetus (strain 82-40) protein is Peptide chain release factor 2.